A 305-amino-acid polypeptide reads, in one-letter code: Oxygen-dependent coproporphyrinogen-III oxidase (305 aa).

Ser93 is a binding site for substrate. The a divalent metal cation site is built by His97 and His107. Catalysis depends on His107, which acts as the Proton donor. Residue 109-111 (NVR) participates in substrate binding. A divalent metal cation is bound by residues His146 and His176. Residues 241–276 (YVEFNLVFDRGTLFGLQSGGRTESILMSLPPQVRWG) form an important for dimerization region. 259-261 (GGR) provides a ligand contact to substrate.

The protein belongs to the aerobic coproporphyrinogen-III oxidase family. As to quaternary structure, homodimer. A divalent metal cation is required as a cofactor.

It is found in the cytoplasm. It carries out the reaction coproporphyrinogen III + O2 + 2 H(+) = protoporphyrinogen IX + 2 CO2 + 2 H2O. Its pathway is porphyrin-containing compound metabolism; protoporphyrin-IX biosynthesis; protoporphyrinogen-IX from coproporphyrinogen-III (O2 route): step 1/1. Involved in the heme biosynthesis. Catalyzes the aerobic oxidative decarboxylation of propionate groups of rings A and B of coproporphyrinogen-III to yield the vinyl groups in protoporphyrinogen-IX. The protein is Oxygen-dependent coproporphyrinogen-III oxidase of Pseudomonas paraeruginosa (strain DSM 24068 / PA7) (Pseudomonas aeruginosa (strain PA7)).